The primary structure comprises 158 residues: Hypoxanthine DNA glycosylase (158 aa).

Residue asparagine 39 is part of the active site.

Belongs to the uracil-DNA glycosylase (UDG) superfamily. Type 6 (HDG) family.

Functionally, excises hypoxanthine, a deamination product of adenine, from double-stranded DNA. Acts on double-stranded DNA containing G/I, T/I, A/I and C/I base pairs, but not on single-stranded inosine-containing DNA. Also has minor xanthine DNA glycosylase activity. Lacks any detectable uracil-DNA glycosylase activity. In Methanosarcina acetivorans (strain ATCC 35395 / DSM 2834 / JCM 12185 / C2A), this protein is Hypoxanthine DNA glycosylase.